The sequence spans 560 residues: Dihydroxy-acid dehydratase (560 aa).

Asp78 is a binding site for Mg(2+). Cys119 is a [2Fe-2S] cluster binding site. Residues Asp120 and Lys121 each coordinate Mg(2+). Lys121 carries the post-translational modification N6-carboxylysine. Cys192 provides a ligand contact to [2Fe-2S] cluster. Glu446 contributes to the Mg(2+) binding site. Ser472 serves as the catalytic Proton acceptor.

Belongs to the IlvD/Edd family. As to quaternary structure, homodimer. [2Fe-2S] cluster is required as a cofactor. It depends on Mg(2+) as a cofactor.

The catalysed reaction is (2R)-2,3-dihydroxy-3-methylbutanoate = 3-methyl-2-oxobutanoate + H2O. It carries out the reaction (2R,3R)-2,3-dihydroxy-3-methylpentanoate = (S)-3-methyl-2-oxopentanoate + H2O. It participates in amino-acid biosynthesis; L-isoleucine biosynthesis; L-isoleucine from 2-oxobutanoate: step 3/4. The protein operates within amino-acid biosynthesis; L-valine biosynthesis; L-valine from pyruvate: step 3/4. Its function is as follows. Functions in the biosynthesis of branched-chain amino acids. Catalyzes the dehydration of (2R,3R)-2,3-dihydroxy-3-methylpentanoate (2,3-dihydroxy-3-methylvalerate) into 2-oxo-3-methylpentanoate (2-oxo-3-methylvalerate) and of (2R)-2,3-dihydroxy-3-methylbutanoate (2,3-dihydroxyisovalerate) into 2-oxo-3-methylbutanoate (2-oxoisovalerate), the penultimate precursor to L-isoleucine and L-valine, respectively. This chain is Dihydroxy-acid dehydratase, found in Anaeromyxobacter sp. (strain K).